The sequence spans 121 residues: RxLR effector protein PexRD2 (121 aa).

A signal peptide spans 1-18 (MRLSYVFVVFAASLLVTA). The RxLR-dEER motif lies at 38–56 (RLLRKHYTAAENDGDSEAR). Positions 57 to 121 (ALNPEKMKTM…LNYVAEHTAV (65 aa)) are WY domain.

The protein belongs to the RxLR effector family.

It localises to the secreted. It is found in the host cytoplasm. The protein localises to the host nucleus. Functionally, secreted effector involved in P.mirabilis colonization of host plants. May perturb the signaling of cell death associated with plant immunity, via interaction with a host MAP kinase. The polypeptide is RxLR effector protein PexRD2 (Phytophthora mirabilis).